A 64-amino-acid polypeptide reads, in one-letter code: Large ribosomal subunit protein bL32 (64 aa).

Positions 1 to 35 (MAVQKSRVTPSRRGQRRSHDALTAKQLSTDPTSGE) are disordered.

This sequence belongs to the bacterial ribosomal protein bL32 family.

This chain is Large ribosomal subunit protein bL32, found in Xanthomonas campestris pv. campestris (strain 8004).